The following is a 225-amino-acid chain: Methyl-CpG-binding domain-containing protein 6 (225 aa).

The segment at 25 to 92 (GDGTLDSSAK…PGWRVEDKIR (68 aa)) is disordered. The MBD domain occupies 71-146 (RKRAAPGDNW…ENTYFNPDHF (76 aa)).

As to quaternary structure, homodimer and heterodimer with MBD5. Interacts with DDM1 via its MBD domain. Interacts with NTF2, RPS2C, HDA6 and AGO4. As to expression, expressed in rosette leaves, buds, flowers, stems, mature seeds and roots.

The protein localises to the nucleus. It localises to the chromosome. It is found in the nucleolus. Its function is as follows. Transcriptional regulator that binds CpG, CpNpN and CpNpG (N is A, T, or C) islands in promoters regardless the DNA methylation status. Plays probably a role in gene silencing. May associate with histone deacetylase proteins (HDAC). Required for nucleolar dominance that consist in the silencing of rRNA genes inherited from one progenitor in genetic hybrids. Recruited to rRNA genes in a DRM2-dependent manner. Maintains gene silencing by interacting with RNA binding proteins (e.g. NTF2, RPS2C, HDA6 and AGO4) and by regulating DNA methylation status. The sequence is that of Methyl-CpG-binding domain-containing protein 6 from Arabidopsis thaliana (Mouse-ear cress).